Reading from the N-terminus, the 89-residue chain is Sugar transporter SemiSWEET (89 aa).

Helical transmembrane passes span 4 to 27 (ILLT…IKTI), 35 to 55 (ISVV…AYGI), and 60 to 82 (FAVL…ITLI). The PQ-loop domain maps to 7–59 (TGLFAAFFTTFAFAPQSIKTIRTRNTEGISVVMYIMFLTGVISWIAYGIMRSD).

As to quaternary structure, homodimer.

Its subcellular location is the cell membrane. The homodimer mediates transmembrane sugar transport down a concentration gradient. Transport is probably effected by rocking-type movements, where a cargo-binding cavity opens first on one and then on the other side of the membrane. In Escherichia coli (strain UMEA 3162-1), this protein is Sugar transporter SemiSWEET.